A 151-amino-acid chain; its full sequence is UPF0178 protein PSHAb0045 (151 aa).

Belongs to the UPF0178 family.

The protein is UPF0178 protein PSHAb0045 of Pseudoalteromonas translucida (strain TAC 125).